We begin with the raw amino-acid sequence, 186 residues long: NADH-quinone oxidoreductase subunit B (186 aa).

Residues Cys44, Cys45, Cys110, and Cys139 each contribute to the [4Fe-4S] cluster site.

The protein belongs to the complex I 20 kDa subunit family. NDH-1 is composed of 14 different subunits. Subunits NuoB, C, D, E, F, and G constitute the peripheral sector of the complex. The cofactor is [4Fe-4S] cluster.

It is found in the cell inner membrane. The enzyme catalyses a quinone + NADH + 5 H(+)(in) = a quinol + NAD(+) + 4 H(+)(out). NDH-1 shuttles electrons from NADH, via FMN and iron-sulfur (Fe-S) centers, to quinones in the respiratory chain. The immediate electron acceptor for the enzyme in this species is believed to be ubiquinone. Couples the redox reaction to proton translocation (for every two electrons transferred, four hydrogen ions are translocated across the cytoplasmic membrane), and thus conserves the redox energy in a proton gradient. This chain is NADH-quinone oxidoreductase subunit B, found in Leptospira biflexa serovar Patoc (strain Patoc 1 / Ames).